Reading from the N-terminus, the 1276-residue chain is Histone-lysine N-methyltransferase PRDM16 (1276 aa).

The segment covering 1–10 (MRSKARARKL) has biased composition (basic residues). Residues 1-68 (MRSKARARKL…DFTPKEGSPY (68 aa)) form a disordered region. Residues 82 to 211 (ADFELRESSI…PGEELLVHVK (130 aa)) form the SET domain. The C2H2-type 1; atypical zinc-finger motif lies at 230–253 (FRCDECDELFQSKLDLRRHKKYTC). 5 consecutive C2H2-type zinc fingers follow at residues 281 to 303 (HECK…MVIH), 309 to 331 (YKCD…QMSH), 337 to 360 (FECE…RSQH), 366 to 388 (HACP…KHIH), and 394 to 416 (FICE…KRMH). A C2H2-type 7; atypical zinc finger spans residues 423 to 445 (IKCKDCGQMFSTTSSLNKHRRFC). Disordered regions lie at residues 533-657 (SLLK…APPG) and 772-804 (PFDL…QPLD). Residues 561–570 (AVSNSSQGTT) show a composition bias toward polar residues. The segment covering 575–597 (PEEKFESRLEDSCVEKLKTRSSD) has biased composition (basic and acidic residues). The segment covering 609-624 (TTTGTDLDTTTGTGSD) has biased composition (low complexity). Residues 632–642 (DPDKDKGKGKS) show a composition bias toward basic and acidic residues. Positions 679–1038 (DEQLLTATGA…KHEHENAPVS (360 aa)) are interaction with CTBP1, CTBP2 and ZNF516. The mediates interaction with SKI and regulation of TGF-beta signaling stretch occupies residues 739–1276 (PFTDRALAHN…SGAFHPINHL (538 aa)). C2H2-type zinc fingers lie at residues 951–973 (YTCR…LRTH), 979–1002 (YRCK…RNIH), and 1008–1032 (FKCH…KHEH). Disordered regions lie at residues 1033–1065 (ENAP…HALL) and 1105–1163 (AQCP…EPAA). The segment covering 1047 to 1058 (HLGTSASSPTSE) has biased composition (polar residues). The span at 1116–1133 (EDVEEEDDDDLEEDDEDS) shows a compositional bias: acidic residues.

It belongs to the PRDM16 family. In terms of assembly, interacts with CEBPA, CEBPB and CEBPD; the interaction is direct. Interacts with PPARG and PPARA; controls brown adipocytes differentiation. Interacts with CTBP1 and CTBP2; represses the expression of WAT-specific genes. Interacts with PPARGC1A and PPARGC1B; interaction with PPARGC1A or PPARGC1B activates the transcription of BAT-specific gene. Interacts with HDAC1, SKI, SMAD2 and SMAD3; the interaction with SKI promotes the recruitment of SMAD3-HDAC1 complex on the promoter of TGF-beta target genes. Interacts with ZNF516; the interaction is direct and may play a role in the transcription of brown adipose tissue-specific gene. As to expression, expressed in uterus and kidney. Expressed in both cardiomyocytes and interstitial cells.

It localises to the nucleus. Its subcellular location is the cytoplasm. The catalysed reaction is L-lysyl(9)-[histone H3] + S-adenosyl-L-methionine = N(6)-methyl-L-lysyl(9)-[histone H3] + S-adenosyl-L-homocysteine + H(+). Functionally, binds DNA and functions as a transcriptional regulator. Displays histone methyltransferase activity and monomethylates 'Lys-9' of histone H3 (H3K9me1) in vitro. Probably catalyzes the monomethylation of free histone H3 in the cytoplasm which is then transported to the nucleus and incorporated into nucleosomes where SUV39H methyltransferases use it as a substrate to catalyze histone H3 'Lys-9' trimethylation. Likely to be one of the primary histone methyltransferases along with MECOM/PRDM3 that direct cytoplasmic H3K9me1 methylation. Functions in the differentiation of brown adipose tissue (BAT) which is specialized in dissipating chemical energy in the form of heat in response to cold or excess feeding while white adipose tissue (WAT) is specialized in the storage of excess energy and the control of systemic metabolism. Together with CEBPB, regulates the differentiation of myoblastic precursors into brown adipose cells. Functions as a repressor of TGF-beta signaling. Binds DNA and functions as a transcriptional regulator. Functions as a repressor of TGF-beta signaling. May regulate granulocyte differentiation. The sequence is that of Histone-lysine N-methyltransferase PRDM16 from Homo sapiens (Human).